Consider the following 143-residue polypeptide: Small ribosomal subunit protein uS11c (143 aa).

It belongs to the universal ribosomal protein uS11 family. In terms of assembly, part of the 30S ribosomal subunit.

Its subcellular location is the plastid. The protein resides in the chloroplast. The protein is Small ribosomal subunit protein uS11c of Zea mays (Maize).